Here is a 137-residue protein sequence, read N- to C-terminus: MPSQKSPTKRSPTKRSPQKGGKGAKRGGKAGKRRRGVAVKRRRRRRESYGIYIYKVLKQVHPDTGISSRAMSVMNSFVNDVFERIASEAGRLTTYNRRNTVSSREVQTAVRLLLPGELAKHAVSEGTKAVTKYTTSR.

Positions 1-43 are disordered; that stretch reads MPSQKSPTKRSPTKRSPQKGGKGAKRGGKAGKRRRGVAVKRRR. Short sequence motifs (SPKK motif) lie at residues 6 to 9, 11 to 14, and 16 to 19; these read SPTK and SPQK. Over residues 7-43 the composition is skewed to basic residues; that stretch reads PTKRSPTKRSPQKGGKGAKRGGKAGKRRRGVAVKRRR. Residues S11 and S16 each carry the phosphoserine modification. A glycan (O-linked (GlcNAc) serine) is linked at S124. Residue K132 forms a Glycyl lysine isopeptide (Lys-Gly) (interchain with G-Cter in ubiquitin) linkage.

Belongs to the histone H2B family. The nucleosome is a histone octamer containing two molecules each of H2A, H2B, H3 and H4 assembled in one H3-H4 heterotetramer and two H2A-H2B heterodimers. The octamer wraps approximately 147 bp of DNA. Monoubiquitination of Lys-132 gives a specific tag for epigenetic transcriptional activation and is also prerequisite for histone H3 'Lys-4' and 'Lys-79' methylation. In terms of processing, phosphorylated on SPKK motifs 2 and 3; which may regulate DNA binding. Dephosphorylated during maturation of spermatids to mature sperm and rephosphorylated at fertilization. Post-translationally, glcNAcylation at Ser-124 promotes monoubiquitination of Lys-132. It fluctuates in response to extracellular glucose, and associates with transcribed genes.

The protein resides in the nucleus. It is found in the chromosome. Functionally, core component of nucleosome. Nucleosomes wrap and compact DNA into chromatin, limiting DNA accessibility to the cellular machineries which require DNA as a template. Histones thereby play a central role in transcription regulation, DNA repair, DNA replication and chromosomal stability. DNA accessibility is regulated via a complex set of post-translational modifications of histones, also called histone code, and nucleosome remodeling. The chain is Histone H2B.1, sperm from Psammechinus miliaris (Green sea urchin).